Reading from the N-terminus, the 427-residue chain is Mucorpepsin (427 aa).

Positions 1-22 (MLFSKISSAILLTAASFALTSA) are cleaved as a signal peptide. Positions 23–66 (RPVSKQSDADDKLLALPLTSVNRKYSQTKHGQQAAEKLGGIKAF) are cleaved as a propeptide — activation peptide. One can recognise a Peptidase A1 domain in the interval 86–418 (YAIPVSIGTP…DFGKNRIGFA (333 aa)). Residue aspartate 104 is part of the active site. The cysteines at positions 117 and 123 are disulfide-linked. N-linked (GlcNAc...) asparagine glycosylation occurs at asparagine 254. Aspartate 303 is a catalytic residue. The cysteines at positions 338 and 382 are disulfide-linked.

It belongs to the peptidase A1 family.

It carries out the reaction Hydrolysis of proteins, favoring hydrophobic residues at P1 and P1'. Clots milk. Does not accept Lys at P1, and hence does not activate trypsinogen.. In terms of biological role, this enzyme, capable of clotting milk is frequently used for cheese production. In Rhizomucor pusillus, this protein is Mucorpepsin.